A 587-amino-acid polypeptide reads, in one-letter code: Beta-(1--&gt;2)glucan export ATP-binding/permease protein NdvA (587 aa).

Residues 21 to 301 (VSLVVIANIV…MRQFATQIFE (281 aa)) enclose the ABC transmembrane type-1 domain. Helical transmembrane passes span 23 to 43 (LVVI…ILFG), 57 to 77 (PILF…VLVS), 126 to 146 (LFGL…ALAL), 158 to 178 (LSAV…VVMS), 248 to 268 (MAST…VQSG), and 272 to 292 (IGDV…LDLM). One can recognise an ABC transporter domain in the interval 335-569 (IEFRDVSFGF…NGRFAALLRA (235 aa)). ATP is bound at residue 368-375 (GPTGAGKT).

Belongs to the ABC transporter superfamily. Beta-(1--&gt;2)glucan exporter (TC 3.A.1.108.1) family. In terms of assembly, homodimer.

It is found in the cell inner membrane. It carries out the reaction [(1-&gt;2)-beta-D-glucosyl](n)(in) + ATP + H2O = [(1-&gt;2)-beta-D-glucosyl](n)(out) + ADP + phosphate + H(+). Involved in beta-(1--&gt;2)glucan export. Transmembrane domains (TMD) form a pore in the inner membrane and the ATP-binding domain (NBD) is responsible for energy generation. The polypeptide is Beta-(1--&gt;2)glucan export ATP-binding/permease protein NdvA (Rhizobium etli (strain ATCC 51251 / DSM 11541 / JCM 21823 / NBRC 15573 / CFN 42)).